The chain runs to 305 residues: PI protein (305 aa).

This sequence belongs to the initiator RepB protein family. Homodimer.

In terms of biological role, initiation for plasmid R6K DNA replication. This is PI protein (pir) from Escherichia coli.